The sequence spans 130 residues: Large ribosomal subunit protein bL12 (130 aa).

It belongs to the bacterial ribosomal protein bL12 family. Homodimer. Part of the ribosomal stalk of the 50S ribosomal subunit. Forms a multimeric L10(L12)X complex, where L10 forms an elongated spine to which 2 to 4 L12 dimers bind in a sequential fashion. Binds GTP-bound translation factors.

Functionally, forms part of the ribosomal stalk which helps the ribosome interact with GTP-bound translation factors. Is thus essential for accurate translation. This chain is Large ribosomal subunit protein bL12, found in Mycolicibacterium paratuberculosis (strain ATCC BAA-968 / K-10) (Mycobacterium paratuberculosis).